The chain runs to 199 residues: V-type proton ATPase subunit E (199 aa).

Belongs to the V-ATPase E subunit family.

Its function is as follows. Produces ATP from ADP in the presence of a proton gradient across the membrane. The polypeptide is V-type proton ATPase subunit E (Clostridium botulinum (strain 657 / Type Ba4)).